A 269-amino-acid polypeptide reads, in one-letter code: Glutamate racemase (269 aa).

Substrate is bound by residues 14-15 and 46-47; these read DS and YS. Residue Cys78 is the Proton donor/acceptor of the active site. 79–80 serves as a coordination point for substrate; that stretch reads NT. Cys189 functions as the Proton donor/acceptor in the catalytic mechanism. A substrate-binding site is contributed by 190–191; the sequence is TH.

Belongs to the aspartate/glutamate racemases family.

It catalyses the reaction L-glutamate = D-glutamate. It participates in cell wall biogenesis; peptidoglycan biosynthesis. Provides the (R)-glutamate required for cell wall biosynthesis. The chain is Glutamate racemase from Haemophilus influenzae (strain ATCC 51907 / DSM 11121 / KW20 / Rd).